We begin with the raw amino-acid sequence, 357 residues long: Carbamoyl phosphate synthase small chain (357 aa).

Residues 1-168 (MSKRLLILED…STATAYPSPN (168 aa)) form a CPSase region. The L-glutamine site is built by S46, G220, and G222. The Glutamine amidotransferase type-1 domain maps to 172 to 357 (KVVVVDFGLK…FMDLMDNFKK (186 aa)). The Nucleophile role is filled by C247. The L-glutamine site is built by L248, Q251, N289, G291, and Y292. Active-site residues include H331 and D333.

The protein belongs to the CarA family. As to quaternary structure, composed of two chains; the small (or glutamine) chain promotes the hydrolysis of glutamine to ammonia, which is used by the large (or ammonia) chain to synthesize carbamoyl phosphate. Tetramer of heterodimers (alpha,beta)4.

The catalysed reaction is hydrogencarbonate + L-glutamine + 2 ATP + H2O = carbamoyl phosphate + L-glutamate + 2 ADP + phosphate + 2 H(+). The enzyme catalyses L-glutamine + H2O = L-glutamate + NH4(+). The protein operates within amino-acid biosynthesis; L-arginine biosynthesis; carbamoyl phosphate from bicarbonate: step 1/1. It participates in pyrimidine metabolism; UMP biosynthesis via de novo pathway; (S)-dihydroorotate from bicarbonate: step 1/3. Small subunit of the glutamine-dependent carbamoyl phosphate synthetase (CPSase). CPSase catalyzes the formation of carbamoyl phosphate from the ammonia moiety of glutamine, carbonate, and phosphate donated by ATP, constituting the first step of 2 biosynthetic pathways, one leading to arginine and/or urea and the other to pyrimidine nucleotides. The small subunit (glutamine amidotransferase) binds and cleaves glutamine to supply the large subunit with the substrate ammonia. The sequence is that of Carbamoyl phosphate synthase small chain from Lactococcus lactis subsp. cremoris (strain MG1363).